Consider the following 190-residue polypeptide: Protein LZIC (190 aa).

Residues 6-64 are a coiled coil; the sequence is KSETSKLRQNMEEQLDRLMQQLQDLEECREDLEEEEYEETKKETLEQLSEFNDSLKKLM.

This sequence belongs to the CTNNBIP1 family. In terms of assembly, does not interact with CTNNB1.

Required for neuronal survival during early development. In Danio rerio (Zebrafish), this protein is Protein LZIC (lzic).